Reading from the N-terminus, the 488-residue chain is Germacrene A hydroxylase (488 aa).

At Met-1–Thr-6 the chain is on the cytoplasmic side. Residues Thr-7–Thr-23 form a helical; Signal-anchor for type II membrane protein membrane-spanning segment. Residues Arg-24–Phe-488 are Lumenal-facing. Asn-255, Asn-260, and Asn-379 each carry an N-linked (GlcNAc...) asparagine glycan. Cys-432 is a binding site for heme.

It belongs to the cytochrome P450 family. Heme is required as a cofactor.

Its subcellular location is the endoplasmic reticulum membrane. It catalyses the reaction (+)-(R)-germacrene A + 3 reduced [NADPH--hemoprotein reductase] + 3 O2 = germacra-1(10),4,11(13)-trien-12-oate + 3 oxidized [NADPH--hemoprotein reductase] + 4 H2O + 4 H(+). It participates in secondary metabolite biosynthesis; terpenoid biosynthesis. Involved in the biosynthesis of germacrene-derived sesquiterpene lactones. Catalyzes three consecutive oxidations of germacrene A to produce germacrene A acid. Could also catalyze the three-step oxidation of non-natural substrate amorphadiene to artemisinic acid. The protein is Germacrene A hydroxylase of Saussurea costus (Costus).